Consider the following 239-residue polypeptide: Putative 3-methyladenine DNA glycosylase (239 aa).

It belongs to the DNA glycosylase MPG family.

The sequence is that of Putative 3-methyladenine DNA glycosylase from Pseudomonas aeruginosa (strain LESB58).